The following is a 186-amino-acid chain: Bis(5'-nucleosyl)-tetraphosphatase, symmetrical (186 aa).

The region spanning 18-132 (RYIHTVGVMN…IYVADYIEPN (115 aa)) is the HD domain. His-21 contacts ADP. Fe cation is bound by residues His-21, His-50, and Asp-51. Residues 51 to 54 (DYAK), His-83, 109 to 110 (HT), Asp-127, Arg-133, and 170 to 175 (PVFPDT) each bind ADP. Residue Asp-127 participates in Fe cation binding.

This sequence belongs to the Ap4A hydrolase YqeK family. As to quaternary structure, homodimer.

The enzyme catalyses P(1),P(4)-bis(5'-adenosyl) tetraphosphate + H2O = 2 ADP + 2 H(+). Functionally, hydrolyzes diadenosine 5',5'''-P1,P4-tetraphosphate (Ap4A) to yield ADP. The polypeptide is Bis(5'-nucleosyl)-tetraphosphatase, symmetrical (yqeK) (Bacillus subtilis (strain 168)).